A 125-amino-acid polypeptide reads, in one-letter code: Protein ApaG (125 aa).

The region spanning 1 to 125 (MIEQPRICVQ…FRLAIPALIH (125 aa)) is the ApaG domain.

In Yersinia pestis bv. Antiqua (strain Antiqua), this protein is Protein ApaG.